Here is a 315-residue protein sequence, read N- to C-terminus: DNA-directed RNA polymerase subunit alpha (315 aa).

An alpha N-terminal domain (alpha-NTD) region spans residues 1-228; it reads MLEIEKPIIE…EHFKLFMSLT (228 aa). The alpha C-terminal domain (alpha-CTD) stretch occupies residues 245-315; that stretch reads KEKVLEMTVE…LGLALKLTEE (71 aa).

This sequence belongs to the RNA polymerase alpha chain family. As to quaternary structure, homodimer. The RNAP catalytic core consists of 2 alpha, 1 beta, 1 beta' and 1 omega subunit. When a sigma factor is associated with the core the holoenzyme is formed, which can initiate transcription.

It catalyses the reaction RNA(n) + a ribonucleoside 5'-triphosphate = RNA(n+1) + diphosphate. In terms of biological role, DNA-dependent RNA polymerase catalyzes the transcription of DNA into RNA using the four ribonucleoside triphosphates as substrates. The protein is DNA-directed RNA polymerase subunit alpha of Clostridium beijerinckii (strain ATCC 51743 / NCIMB 8052) (Clostridium acetobutylicum).